The following is a 193-amino-acid chain: dCTP deaminase (193 aa).

Residues 110–115 (RSSLAR), D128, 136–138 (VLE), Y171, K178, and Q182 contribute to the dCTP site. Residue E138 is the Proton donor/acceptor of the active site. The interval 169–193 (RPYNRREDAKYRNQQGAVASRIDKD) is disordered.

Belongs to the dCTP deaminase family. Homotrimer.

The enzyme catalyses dCTP + H2O + H(+) = dUTP + NH4(+). It participates in pyrimidine metabolism; dUMP biosynthesis; dUMP from dCTP (dUTP route): step 1/2. In terms of biological role, catalyzes the deamination of dCTP to dUTP. The sequence is that of dCTP deaminase from Escherichia coli O1:K1 / APEC.